We begin with the raw amino-acid sequence, 405 residues long: Multidrug resistance protein MdtA (405 aa).

The first 22 residues, 1–22, serve as a signal peptide directing secretion; that stretch reads MKTPRRFPLIALTVAAVLTAAA. Residues 35-52 are compositionally biased toward polar residues; the sequence is VQNRQGTEQQRASNSQGS. A disordered region spans residues 35 to 62; the sequence is VQNRQGTEQQRASNSQGSAKRAGNAPPV.

This sequence belongs to the membrane fusion protein (MFP) (TC 8.A.1) family. Part of a tripartite efflux system composed of MdtA, MdtB and MdtC.

The protein resides in the cell inner membrane. This Erwinia amylovora (strain ATCC 49946 / CCPPB 0273 / Ea273 / 27-3) protein is Multidrug resistance protein MdtA.